Consider the following 415-residue polypeptide: Histidine--tRNA ligase (415 aa).

Belongs to the class-II aminoacyl-tRNA synthetase family. In terms of assembly, homodimer.

It is found in the cytoplasm. The enzyme catalyses tRNA(His) + L-histidine + ATP = L-histidyl-tRNA(His) + AMP + diphosphate + H(+). The chain is Histidine--tRNA ligase from Rickettsia felis (strain ATCC VR-1525 / URRWXCal2) (Rickettsia azadi).